The primary structure comprises 212 residues: Uridine kinase (212 aa).

12-19 (GGSGGGKT) provides a ligand contact to ATP.

The protein belongs to the uridine kinase family.

Its subcellular location is the cytoplasm. It catalyses the reaction uridine + ATP = UMP + ADP + H(+). It carries out the reaction cytidine + ATP = CMP + ADP + H(+). Its pathway is pyrimidine metabolism; CTP biosynthesis via salvage pathway; CTP from cytidine: step 1/3. It functions in the pathway pyrimidine metabolism; UMP biosynthesis via salvage pathway; UMP from uridine: step 1/1. This is Uridine kinase from Streptococcus pneumoniae serotype 2 (strain D39 / NCTC 7466).